We begin with the raw amino-acid sequence, 97 residues long: Aspartyl/glutamyl-tRNA(Asn/Gln) amidotransferase subunit C (97 aa).

This sequence belongs to the GatC family. Heterotrimer of A, B and C subunits.

The enzyme catalyses L-glutamyl-tRNA(Gln) + L-glutamine + ATP + H2O = L-glutaminyl-tRNA(Gln) + L-glutamate + ADP + phosphate + H(+). It catalyses the reaction L-aspartyl-tRNA(Asn) + L-glutamine + ATP + H2O = L-asparaginyl-tRNA(Asn) + L-glutamate + ADP + phosphate + 2 H(+). Its function is as follows. Allows the formation of correctly charged Asn-tRNA(Asn) or Gln-tRNA(Gln) through the transamidation of misacylated Asp-tRNA(Asn) or Glu-tRNA(Gln) in organisms which lack either or both of asparaginyl-tRNA or glutaminyl-tRNA synthetases. The reaction takes place in the presence of glutamine and ATP through an activated phospho-Asp-tRNA(Asn) or phospho-Glu-tRNA(Gln). The sequence is that of Aspartyl/glutamyl-tRNA(Asn/Gln) amidotransferase subunit C from Roseiflexus sp. (strain RS-1).